The chain runs to 158 residues: Protein-export protein SecB (158 aa).

This sequence belongs to the SecB family. Homotetramer, a dimer of dimers. One homotetramer interacts with 1 SecA dimer.

The protein resides in the cytoplasm. Functionally, one of the proteins required for the normal export of preproteins out of the cell cytoplasm. It is a molecular chaperone that binds to a subset of precursor proteins, maintaining them in a translocation-competent state. It also specifically binds to its receptor SecA. This is Protein-export protein SecB from Rhodopseudomonas palustris (strain HaA2).